Reading from the N-terminus, the 969-residue chain is RNA polymerase-associated protein RapA (969 aa).

The 171-residue stretch at 164–334 folds into the Helicase ATP-binding domain; it reads EVGRRYAPRV…FARLRLLDPD (171 aa). ATP is bound at residue 177–184; sequence DEVGLGKT. Positions 280-283 match the DEAH box motif; that stretch reads DEAH. The Helicase C-terminal domain occupies 492–672; it reads RVNWLLELLK…GLEPLIEESA (181 aa).

Belongs to the SNF2/RAD54 helicase family. RapA subfamily. Interacts with the RNAP. Has a higher affinity for the core RNAP than for the holoenzyme. Its ATPase activity is stimulated by binding to RNAP.

Its function is as follows. Transcription regulator that activates transcription by stimulating RNA polymerase (RNAP) recycling in case of stress conditions such as supercoiled DNA or high salt concentrations. Probably acts by releasing the RNAP, when it is trapped or immobilized on tightly supercoiled DNA. Does not activate transcription on linear DNA. Probably not involved in DNA repair. This chain is RNA polymerase-associated protein RapA, found in Aliivibrio salmonicida (strain LFI1238) (Vibrio salmonicida (strain LFI1238)).